The sequence spans 680 residues: Enzymatic polyprotein (680 aa).

Residues 41–131 (LHCFVDTGAS…LYEPFIQFTD (91 aa)) form a protease region. Asp-46 is an active-site residue. The region spanning 273–453 (LKVIKPSKSP…KKINFLGLEI (181 aa)) is the Reverse transcriptase domain.

Belongs to the caulimoviridae enzymatic polyprotein family.

It catalyses the reaction DNA(n) + a 2'-deoxyribonucleoside 5'-triphosphate = DNA(n+1) + diphosphate. Its function is as follows. Encodes for at least two polypeptides: protease (PR) and reverse transcriptase (RT). The protease processes the polyprotein in cis. Reverse transcriptase is multifunctional enzyme that converts the viral RNA genome into dsDNA in viral cytoplasmic capsids. This enzyme displays a DNA polymerase activity that can copy either DNA or RNA templates, and a ribonuclease H (RNase H) activity that cleaves the RNA strand of RNA-DNA heteroduplexes in a partially processive 3'- to 5'-endonucleasic mode. Neo-synthesized pregenomic RNA (pgRNA) are encapsidated, and reverse-transcribed inside the nucleocapsid. Partial (+)DNA is synthesized from the (-)DNA template and generates the relaxed circular DNA (RC-DNA) genome. After budding and infection, the RC-DNA migrates in the nucleus, and is converted into a plasmid-like covalently closed circular DNA (cccDNA). This is Enzymatic polyprotein from Cauliflower mosaic virus (strain NY8153) (CaMV).